Reading from the N-terminus, the 534-residue chain is Phosphoenolpyruvate carboxykinase (ATP) (534 aa).

Residues Arg59, Tyr200, and Lys206 each coordinate substrate. ATP contacts are provided by residues Lys206, His225, and 242-250 (GLSGTGKTT). Mn(2+) contacts are provided by Lys206 and His225. Position 263 (Asp263) interacts with Mn(2+). ATP-binding positions include Glu291, Arg327, 443–444 (RI), and Thr449. Arg327 lines the substrate pocket.

It belongs to the phosphoenolpyruvate carboxykinase (ATP) family. It depends on Mn(2+) as a cofactor.

The protein localises to the cytoplasm. The enzyme catalyses oxaloacetate + ATP = phosphoenolpyruvate + ADP + CO2. It functions in the pathway carbohydrate biosynthesis; gluconeogenesis. Its function is as follows. Involved in the gluconeogenesis. Catalyzes the conversion of oxaloacetate (OAA) to phosphoenolpyruvate (PEP) through direct phosphoryl transfer between the nucleoside triphosphate and OAA. This Agathobacter rectalis (strain ATCC 33656 / DSM 3377 / JCM 17463 / KCTC 5835 / VPI 0990) (Eubacterium rectale) protein is Phosphoenolpyruvate carboxykinase (ATP).